The sequence spans 288 residues: Very-long-chain (3R)-3-hydroxyacyl-CoA dehydratase 1 (288 aa).

A disordered region spans residues 1 to 59 (MGRLTEAAAAGGGASAARSAGPPPAPLPLSSTSPGCAAAMASSEEDGTNGGASEASDER). Over 1–75 (MGRLTEAAAA…RRLGLLATIW (75 aa)) the chain is Cytoplasmic. Residues 76–95 (LTFYNIAMTAGWLVLAIAMV) form a helical membrane-spanning segment. Residues 96–114 (RFYMEKGTHKGLYKSIQKT) are Lumenal-facing. Residues 115-131 (LKFFQTFALLEIVHCLI) traverse the membrane as a helical segment. At 132–141 (GIVPTSVLVA) the chain is on the cytoplasmic side. Residues 142 to 159 (GVQVSSRIFMVWLVTHSI) traverse the membrane as a helical segment. The Lumenal segment spans residues 160 to 165 (KPIQNE). The chain crosses the membrane as a helical span at residues 166 to 180 (ESVVLFLVAWTVTEI). Residues 181–203 (TRYSFYTFSLLDHLPYFIKWARY) lie on the Cytoplasmic side of the membrane. Residues 204–221 (NFFIILYPVGVAGELLTI) traverse the membrane as a helical segment. Residues Tyr210 and Glu217 contribute to the active site. The Lumenal segment spans residues 222 to 251 (YAALPYVKKTGMFSIRLPNKYNVSFDYYYF). Asn243 carries N-linked (GlcNAc...) asparagine glycosylation. A helical transmembrane segment spans residues 252-269 (LLITMASYIPLFPQLYFH). The Cytoplasmic segment spans residues 270–288 (MLRQRRKVLHGEVIVEKDD).

It belongs to the very long-chain fatty acids dehydratase HACD family. As to quaternary structure, may interact with enzymes of the ELO family (including ELOVL1); with those enzymes that mediate condensation, the first of the four steps of the reaction cycle responsible for fatty acids elongation, may be part of a larger fatty acids elongase complex. Interacts with TECR. Post-translationally, N-glycosylated. Expressed in heart.

The protein localises to the endoplasmic reticulum membrane. The enzyme catalyses a very-long-chain (3R)-3-hydroxyacyl-CoA = a very-long-chain (2E)-enoyl-CoA + H2O. The catalysed reaction is (3R)-hydroxyhexadecanoyl-CoA = (2E)-hexadecenoyl-CoA + H2O. It catalyses the reaction (3R)-hydroxyoctadecanoyl-CoA = (2E)-octadecenoyl-CoA + H2O. It carries out the reaction (3R)-hydroxyeicosanoyl-CoA = (2E)-eicosenoyl-CoA + H2O. The enzyme catalyses (3R)-hydroxydocosanoyl-CoA = (2E)-docosenoyl-CoA + H2O. The catalysed reaction is (3R)-hydroxytetracosanoyl-CoA = (2E)-tetracosenoyl-CoA + H2O. It catalyses the reaction (3R)-hydroxyhexacosanoyl-CoA = (2E)-hexacosenoyl-CoA + H2O. Its pathway is lipid metabolism; fatty acid biosynthesis. Functionally, catalyzes the third of the four reactions of the long-chain fatty acids elongation cycle. This endoplasmic reticulum-bound enzymatic process, allows the addition of two carbons to the chain of long- and very long-chain fatty acids/VLCFAs per cycle. This enzyme catalyzes the dehydration of the 3-hydroxyacyl-CoA intermediate into trans-2,3-enoyl-CoA, within each cycle of fatty acid elongation. Thereby, it participates in the production of VLCFAs of different chain lengths that are involved in multiple biological processes as precursors of membrane lipids and lipid mediators. In Ovis aries (Sheep), this protein is Very-long-chain (3R)-3-hydroxyacyl-CoA dehydratase 1 (HACD1).